The chain runs to 309 residues: Olfactory receptor 2G3 (309 aa).

Residues 1-25 (MGLGNESSLMDFILLGFSDHPRLEA) are Extracellular-facing. Asn5 carries N-linked (GlcNAc...) asparagine glycosylation. Residues 26–49 (VLFVFVLFFYLLTLVGNFTIIIIS) traverse the membrane as a helical segment. The Cytoplasmic segment spans residues 50 to 57 (YLDPPLHT). A helical membrane pass occupies residues 58–79 (PMYFFLSNLSLLDICFTTSLAP). Residues 80–100 (QTLVNLQRPKKTITYGGCVAQ) lie on the Extracellular side of the membrane. Cys97 and Cys189 are disulfide-bonded. Residues 101 to 120 (LYISLALGSTECILLADMAL) traverse the membrane as a helical segment. Residues 121–139 (DRYIAVCKPLHYVVIMNPR) are Cytoplasmic-facing. A helical transmembrane segment spans residues 140 to 158 (LCQQLASISWLSGLASSLI). Residues 159–195 (HATFTLQLPLCGNHRLDHFICEVPALLKLACVDTTVN) are Extracellular-facing. Residues 196 to 219 (ELVLFVVSVLFVVIPPALISISYG) form a helical membrane-spanning segment. The Cytoplasmic portion of the chain corresponds to 220–236 (FITQAVLRIKSVEARHK). Residues 237 to 259 (AFSTCSSHLTVVIIFYGTIIYVY) form a helical membrane-spanning segment. The Extracellular segment spans residues 260-272 (LQPSDSYAQDQGK). The helical transmembrane segment at 273–292 (FISLFYTMVTPTLNPIIYTL) threads the bilayer. The Cytoplasmic segment spans residues 293–309 (RNKDMKEALRKLLSGKL).

It belongs to the G-protein coupled receptor 1 family.

The protein resides in the cell membrane. Its function is as follows. Odorant receptor. In Homo sapiens (Human), this protein is Olfactory receptor 2G3 (OR2G3).